The primary structure comprises 538 residues: Zinc finger protein with KRAB and SCAN domains 3 (538 aa).

Ser-42 is subject to Phosphoserine. Residues 46 to 128 (RERFRGFRYP…VLLEYLERQL (83 aa)) form the SCAN box domain. Residue Lys-171 forms a Glycyl lysine isopeptide (Lys-Gly) (interchain with G-Cter in SUMO2) linkage. Phosphothreonine is present on Thr-207. The KRAB domain maps to 214-274 (LKVEDVALTL…PAEELPEKEH (61 aa)). The span at 226–236 (EWTQQDSSQGN) shows a compositional bias: polar residues. Residues 226-274 (EWTQQDSSQGNLCRDEKQENHGSLVSLGDEKQTKSRDLPPAEELPEKEH) are disordered. Positions 253–274 (GDEKQTKSRDLPPAEELPEKEH) are enriched in basic and acidic residues. C2H2-type zinc fingers lie at residues 314 to 336 (HICHECGKSFAQSSGLSKHRRIH), 342 to 364 (YECEECGKAFIGSSALVIHQRVH), 370 to 392 (YECEECGKAFSHSSDLIKHQRTH), 398 to 420 (YECDDCGKTFSQSCSLLEHHRIH), and 426 to 448 (YQCSMCGKAFRRSSHLLRHQRIH). Position 449 is a phosphothreonine (Thr-449). 2 consecutive C2H2-type zinc fingers follow at residues 480–502 (YKCNECERSFTQNTGLIEHQKIH) and 508–530 (YQCNACGKGFTRISYLVQHQRSH).

This sequence belongs to the krueppel C2H2-type zinc-finger protein family.

It is found in the nucleus. It localises to the cytoplasm. In terms of biological role, transcriptional factor that binds to the consensus sequence 5'-[GT][AG][AGT]GGGG-3' and acts as a repressor of autophagy. Specifically represses expression of genes involved in autophagy and lysosome biogenesis/function such as MAP1LC3B, ULK1 or WIPI2. Associates with chromatin at the ITGB4 and VEGF promoters. Also acts as a transcription activator and promotes cancer cell progression and/or migration in various tumors and myelomas. The sequence is that of Zinc finger protein with KRAB and SCAN domains 3 (ZKSCAN3) from Homo sapiens (Human).